A 100-amino-acid chain; its full sequence is Omega-hexatoxin-Asp2a (100 aa).

The first 23 residues, 1-23 (MKFSKLSITLAVILTQAVFVLCG), serve as a signal peptide directing secretion. A propeptide spanning residues 24–55 (MKNEDFMEKGLESNELHDAIKKPVNSGKPDTE) is cleaved from the precursor. Disulfide bonds link C60–C73, C66–C79, and C72–C84.

It belongs to the neurotoxin 15 family. 02 (omega-actx) subfamily. In terms of tissue distribution, expressed by the venom gland.

Its subcellular location is the secreted. In terms of biological role, potent inhibitor of insect, but not mammalian, voltage-gated calcium channels (Cav). In Atrax sp. (strain Illawarra) (Funnel-web spider), this protein is Omega-hexatoxin-Asp2a.